The primary structure comprises 264 residues: Small ribosomal subunit protein uS2 (264 aa).

Positions 222–246 (GRSENKDEQNEQGEQIAPVTNEEKQ) are disordered.

Belongs to the universal ribosomal protein uS2 family.

This is Small ribosomal subunit protein uS2 from Helicobacter hepaticus (strain ATCC 51449 / 3B1).